A 345-amino-acid chain; its full sequence is MSERKVLNKYYPPDFDPSKIPKLKLPKDRQYVVRLMAPFNMRCKTCGEYIYKGKKFNARKETVQNELYLGLPIFRFYIKCTRCLAEITFKTDPENTDYAMEHGATRNFQAEKLIEEEEKKIQQEREDEELNNPMKVLENRTRDSKLEMEVLENLQELKELNQRQAQVDFEGMLGQYKELEQRQKQREQEEDEQETKEMLERALVKRLRDSDSEEEAENAKERSKKHIADKPTDILTTDTSTSSQGLSSAVAKKQSWDRSVGGLSVKGALGSLVVRKKPADSASKPSHAAPPPAAAAAGTQTGAVKPESSITSSSASSNIQPVSCQNGSSLGLLGAYSDSDDSSSD.

Cys-43, Cys-46, Cys-80, and Cys-83 together coordinate Zn(2+). A disordered region spans residues 205–345 (KRLRDSDSEE…YSDSDDSSSD (141 aa)). Positions 217–232 (ENAKERSKKHIADKPT) are enriched in basic and acidic residues. Low complexity-rich tracts occupy residues 308 to 317 (SSITSSSASS) and 327 to 337 (GSSLGLLGAYS).

The protein belongs to the CWC16 family. YJU2 subfamily. In terms of assembly, component of the spliceosome. Present in the activated B complex, the catalytically activated B* complex which catalyzes the branching, the catalytic step 1 C complex catalyzing the exon ligation, and the postcatalytic P complex containing the ligated exons (mRNA) and the excised lariat intron.

It localises to the nucleus. Part of the spliceosome which catalyzes two sequential transesterification reactions, first the excision of the non-coding intron from pre-mRNA and then the ligation of the coding exons to form the mature mRNA. Plays a role in stabilizing the structure of the spliceosome catalytic core and docking of the branch helix into the active site, producing 5'-exon and lariat intron-3'-intermediates. May protect cells from TP53-dependent apoptosis upon dsDNA break damage through association with PRP19-CD5L complex. The protein is Splicing factor YJU2 of Danio rerio (Zebrafish).